An 808-amino-acid polypeptide reads, in one-letter code: Phenylalanine--tRNA ligase beta subunit (808 aa).

The 110-residue stretch at 40 to 149 folds into the tRNA-binding domain; it reads RPELDFVKIV…DQAEVGKTIR (110 aa). Residues 407–484 enclose the B5 domain; that stretch reads HKEVRIHTDI…RTKGYDTIQV (78 aa). 4 residues coordinate Mg(2+): Asp-462, Asp-468, Glu-471, and Glu-472. Residues 716-808 form the FDX-ACB domain; it reads SQFPEAEIDL…LAGKNGFVLR (93 aa).

It belongs to the phenylalanyl-tRNA synthetase beta subunit family. Type 1 subfamily. As to quaternary structure, tetramer of two alpha and two beta subunits. It depends on Mg(2+) as a cofactor.

The protein resides in the cytoplasm. The enzyme catalyses tRNA(Phe) + L-phenylalanine + ATP = L-phenylalanyl-tRNA(Phe) + AMP + diphosphate + H(+). This is Phenylalanine--tRNA ligase beta subunit from Leptospira interrogans serogroup Icterohaemorrhagiae serovar copenhageni (strain Fiocruz L1-130).